Here is a 212-residue protein sequence, read N- to C-terminus: Interleukin-6 (212 aa).

Positions 1–27 (MNSVSTSAFGPVAFSLGLLLVLPAAFP) are cleaved as a signal peptide. Cys72 and Cys78 are disulfide-bonded. N-linked (GlcNAc...) asparagine glycosylation is present at Asn73. Ser81 carries the post-translational modification Phosphoserine. Cysteines 101 and 111 form a disulfide. N-linked (GlcNAc...) asparagine glycosylation occurs at Asn172.

It belongs to the IL-6 superfamily. As to quaternary structure, component of a hexamer of two molecules each of IL6, IL6R and IL6ST; first binds to IL6R to associate with the signaling subunit IL6ST. Interacts with IL6R (via the N-terminal ectodomain); this interaction may be affected by IL6R-binding with SORL1, hence decreasing IL6 cis signaling. Interacts with SORL1 (via the N-terminal ectodomain); this interaction leads to IL6 internalization and lysosomal degradation. May form a trimeric complex with the soluble SORL1 ectodomain and soluble IL6R receptor; this interaction might stabilize circulating IL6, hence promoting IL6 trans signaling.

Its subcellular location is the secreted. Functionally, cytokine with a wide variety of biological functions in immunity, tissue regeneration, and metabolism. Binds to IL6R, then the complex associates to the signaling subunit IL6ST/gp130 to trigger the intracellular IL6-signaling pathway. The interaction with the membrane-bound IL6R and IL6ST stimulates 'classic signaling', whereas the binding of IL6 and soluble IL6R to IL6ST stimulates 'trans-signaling'. Alternatively, 'cluster signaling' occurs when membrane-bound IL6:IL6R complexes on transmitter cells activate IL6ST receptors on neighboring receiver cells. IL6 is a potent inducer of the acute phase response. Rapid production of IL6 contributes to host defense during infection and tissue injury, but excessive IL6 synthesis is involved in disease pathology. In the innate immune response, is synthesized by myeloid cells, such as macrophages and dendritic cells, upon recognition of pathogens through toll-like receptors (TLRs) at the site of infection or tissue injury. In the adaptive immune response, is required for the differentiation of B cells into immunoglobulin-secreting cells. Plays a major role in the differentiation of CD4(+) T cell subsets. Essential factor for the development of T follicular helper (Tfh) cells that are required for the induction of germinal-center formation. Required to drive naive CD4(+) T cells to the Th17 lineage. Also required for proliferation of myeloma cells and the survival of plasmablast cells. In terms of biological role, acts as an essential factor in bone homeostasis and on vessels directly or indirectly by induction of VEGF, resulting in increased angiogenesis activity and vascular permeability. Induces, through 'trans-signaling' and synergistically with IL1B and TNF, the production of VEGF. Involved in metabolic controls, is discharged into the bloodstream after muscle contraction increasing lipolysis and improving insulin resistance. 'Trans-signaling' in central nervous system also regulates energy and glucose homeostasis. Mediates, through GLP-1, crosstalk between insulin-sensitive tissues, intestinal L cells and pancreatic islets to adapt to changes in insulin demand. Also acts as a myokine. Plays a protective role during liver injury, being required for maintenance of tissue regeneration. Also has a pivotal role in iron metabolism by regulating HAMP/hepcidin expression upon inflammation or bacterial infection. Through activation of IL6ST-YAP-NOTCH pathway, induces inflammation-induced epithelial regeneration. The protein is Interleukin-6 (IL6) of Macaca thibetana (Pere David's macaque).